We begin with the raw amino-acid sequence, 223 residues long: Superoxide dismutase [Mn], mitochondrial (223 aa).

A mitochondrion-targeting transit peptide spans 1–24 (MNLIIGVAGRLLVGKNYCLNTQRL). The Mn(2+) site is built by His-50, His-98, Asp-184, and His-188.

It belongs to the iron/manganese superoxide dismutase family. As to quaternary structure, homotetramer. Mn(2+) is required as a cofactor.

It localises to the mitochondrion matrix. The catalysed reaction is 2 superoxide + 2 H(+) = H2O2 + O2. In terms of biological role, destroys superoxide anion radicals which are normally produced within the cells and which are toxic to biological systems. This chain is Superoxide dismutase [Mn], mitochondrial (sod-2), found in Onchocerca volvulus.